The sequence spans 64 residues: Conotoxin Pn-B01122 (64 aa).

The N-terminal stretch at 1-22 is a signal peptide; it reads MRCLPVFVILLLLIASAPSVDA. A propeptide spanning residues 23 to 48 is cleaved from the precursor; it reads RPKTKDDIPLVSFQDNAKRALQILSN.

The protein belongs to the conotoxin T superfamily. Contains 2 disulfide bonds that can be either 'C1-C3, C2-C4' or 'C1-C4, C2-C3', since these disulfide connectivities have been observed for conotoxins with cysteine framework V (for examples, see AC P0DQQ7 and AC P81755). Expressed by the venom duct.

The protein resides in the secreted. In Conus pennaceus (Feathered cone), this protein is Conotoxin Pn-B01122.